A 134-amino-acid chain; its full sequence is Large ribosomal subunit protein bL20 (134 aa).

This sequence belongs to the bacterial ribosomal protein bL20 family.

Its function is as follows. Binds directly to 23S ribosomal RNA and is necessary for the in vitro assembly process of the 50S ribosomal subunit. It is not involved in the protein synthesizing functions of that subunit. The polypeptide is Large ribosomal subunit protein bL20 (Brucella anthropi (strain ATCC 49188 / DSM 6882 / CCUG 24695 / JCM 21032 / LMG 3331 / NBRC 15819 / NCTC 12168 / Alc 37) (Ochrobactrum anthropi)).